The following is a 161-amino-acid chain: Glycine-rich RNA-binding protein blt801 (161 aa).

An RRM domain is found at 6-84 (YRCFVGGLRW…RNITVNEAQS (79 aa)). The segment at 72-161 (LDGRNITVNE…GGSGGGNWRE (90 aa)) is disordered. S87 carries the post-translational modification Phosphoserine; by PKA. Gly residues predominate over residues 89 to 161 (GGGGFGGGGG…GGSGGGNWRE (73 aa)).

Functionally, binds single-stranded DNA and homoribopolymers of guanine, uracil and adenine, but not cytosine. Also binds RNA, with a preference for RNA containing a high proportion of adenine within an open loop structure. Possibly has a role in RNA transcription or processing during stress. The chain is Glycine-rich RNA-binding protein blt801 from Hordeum vulgare (Barley).